A 529-amino-acid chain; its full sequence is MLSKEGDFSKEQRERLSHFVTNLDSPIFALKNLPEVVKGALFSKYSRSILGLRALLLKEFLDGEGGDFLSEDLQDCELGIQKAADFYRRVLDNFGDDSVGELGGAHLAIEQVSMLAAKVLEDARIGGSPLEKSSRYVYFDQKVNGEYLYYRDPILMTSAFKDTFLDTCDFLFNTYSELIPQVRAYFEKIYPKDPEVSQSAYTVSLRAKVLDCLRGLLPAATLTNLGFFGNGRFWQNLLHRLQDNNLVEVRNIGEQALTELMKIIPSFVSRAEPHHHHHQAMVDYHLGLREQLKSFAQRYGEEREPSLEKGVKLVYGDPDGLYKIAAASMFPYSEHTYADLLDICRKIPDEDLMLILESSASSRENRRHKSPRGLECAEFAFDITADFGAYRDLQRHRILTQERQLLTTKLGYSIPQQLLDTPMEAPFREAMEKADQAYRLIAAEFPEEAQYVVPLAYNIRWLFHINTRGLQWLCELRSQPQGHESYRQIAIDMAKEVIQFHPAYKSFLKFVDYSETDLGRLKQESRRKA.

ThyX domains follow at residues 38–274 (KGAL…AEPH) and 309–511 (KGVK…LKFV).

The protein belongs to the UPF0159 family.

In Chlamydia muridarum (strain MoPn / Nigg), this protein is UPF0159 protein TC_0921.